Consider the following 463-residue polypeptide: Glutamyl-tRNA(Gln) amidotransferase subunit A, mitochondrial (463 aa).

Residues Lys-47 and Ser-124 each act as charge relay system in the active site. Ser-148 serves as the catalytic Acyl-ester intermediate.

Belongs to the amidase family. GatA subfamily. In terms of assembly, subunit of the heterotrimeric GatFAB amidotransferase (AdT) complex, composed of A, B and F subunits.

The protein resides in the mitochondrion. It carries out the reaction L-glutamyl-tRNA(Gln) + L-glutamine + ATP + H2O = L-glutaminyl-tRNA(Gln) + L-glutamate + ADP + phosphate + H(+). In terms of biological role, allows the formation of correctly charged Gln-tRNA(Gln) through the transamidation of misacylated Glu-tRNA(Gln) in the mitochondria. The reaction takes place in the presence of glutamine and ATP through an activated gamma-phospho-Glu-tRNA(Gln). The sequence is that of Glutamyl-tRNA(Gln) amidotransferase subunit A, mitochondrial from Eremothecium gossypii (strain ATCC 10895 / CBS 109.51 / FGSC 9923 / NRRL Y-1056) (Yeast).